The sequence spans 389 residues: tRNA-specific 2-thiouridylase MnmA (389 aa).

Residues 35–42 (GMSGGVDS) and Met-61 each bind ATP. Positions 121–123 (NPD) are interaction with target base in tRNA. Catalysis depends on Cys-126, which acts as the Nucleophile. The cysteines at positions 126 and 223 are disulfide-linked. ATP is bound at residue Gly-151. Positions 173-175 (KDQ) are interaction with tRNA. The active-site Cysteine persulfide intermediate is Cys-223. The tract at residues 335–336 (RY) is interaction with tRNA.

The protein belongs to the MnmA/TRMU family.

The protein resides in the cytoplasm. It catalyses the reaction S-sulfanyl-L-cysteinyl-[protein] + uridine(34) in tRNA + AH2 + ATP = 2-thiouridine(34) in tRNA + L-cysteinyl-[protein] + A + AMP + diphosphate + H(+). Its function is as follows. Catalyzes the 2-thiolation of uridine at the wobble position (U34) of tRNA, leading to the formation of s(2)U34. The polypeptide is tRNA-specific 2-thiouridylase MnmA (Actinobacillus pleuropneumoniae serotype 5b (strain L20)).